The chain runs to 132 residues: Small ribosomal subunit protein uS8c (132 aa).

This sequence belongs to the universal ribosomal protein uS8 family. As to quaternary structure, part of the 30S ribosomal subunit.

It localises to the plastid. It is found in the chloroplast. One of the primary rRNA binding proteins, it binds directly to 16S rRNA central domain where it helps coordinate assembly of the platform of the 30S subunit. The polypeptide is Small ribosomal subunit protein uS8c (rps8) (Pinus thunbergii (Japanese black pine)).